Here is a 297-residue protein sequence, read N- to C-terminus: Trimeric intracellular cation channel type A (297 aa).

Residues 1–18 (MDLISSLSLGELALSFSR) are Lumenal-facing. A helical transmembrane segment spans residues 19-39 (VPLFPVFDLSYFIVSIIYLKY). Over 40-51 (EPGSVELSRRHP) the chain is Cytoplasmic. A helical membrane pass occupies residues 52–72 (VASWLCAMLHCFGSYILADLL). Over 73–85 (LGEPIIDYFSNSS) the chain is Lumenal. Position 74 (Gly-74) interacts with Ca(2+). The helical transmembrane segment at 86-106 (SILLASGVWYLIFFCPLDLFY) threads the bilayer. Over 107 to 143 (KCVCFLPVKLIFVAMKEVVRVRKIAVGIHHAHHYHHG) the chain is Cytoplasmic. A 1,2-diacyl-sn-glycero-3-phospho-(1D-myo-inositol-4,5-bisphosphate)-binding residues include Lys-122 and Arg-126. Residues 144 to 164 (WFIMIATGWVKGSGVALLSNL) traverse the membrane as a helical segment. Over 165-177 (EQLLRGVWKPETN) the chain is Lumenal. A helical transmembrane segment spans residues 178–198 (EILHMSFPTKASLYGAILFTL). Residues 199–208 (QQTRWLPVSK) lie on the Cytoplasmic side of the membrane. Residues 209-229 (ASLIFVFTMFMVSCKVFLTAT) form a helical membrane-spanning segment. The Lumenal portion of the chain corresponds to 230-233 (HSHS). The helical transmembrane segment at 234–254 (SPFDVLEGYICPVLFGATWGG) threads the bilayer. Residues 255-297 (DHHHDNHGAPHGMGLGTQHSGLPAKAKEELSEGFRKKKTKKAD) lie on the Cytoplasmic side of the membrane. Residues 259–297 (DNHGAPHGMGLGTQHSGLPAKAKEELSEGFRKKKTKKAD) form a disordered region. Residues 279 to 288 (KAKEELSEGF) are compositionally biased toward basic and acidic residues.

This sequence belongs to the TMEM38 family. Homotrimer; conformation seems to be controled by binding to diacylglycerol (DAG).

Its subcellular location is the sarcoplasmic reticulum membrane. The protein resides in the nucleus membrane. It carries out the reaction K(+)(in) = K(+)(out). Its activity is regulated as follows. Channel activity is activated by a change of voltage within the sarcoplasmic reticulum lumen and blocked by luminal high Ca(2+) levels. Intracellular monovalent cation channel required for maintenance of rapid intracellular calcium release. Acts as a potassium counter-ion channel that functions in synchronization with calcium release from intracellular stores. Opened by a change of voltage within the sarcoplasmic reticulum lumen. In Rattus norvegicus (Rat), this protein is Trimeric intracellular cation channel type A.